We begin with the raw amino-acid sequence, 353 residues long: Inactive ADP-ribosyltransferase ARH2 (353 aa).

Ser-27 is subject to Phosphoserine.

Belongs to the ADP-ribosylglycohydrolase family. In terms of tissue distribution, expressed in the embryonic heart at E11.5.

It is found in the cytoplasm. The protein resides in the myofibril. The protein localises to the sarcomere. Functionally, required for myofibril assembly and outgrowth of the cardiac chambers in the developing heart. Appears to be catalytically inactive, showing no activity against O-acetyl-ADP-ribose. The sequence is that of Inactive ADP-ribosyltransferase ARH2 (Adprhl1) from Mus musculus (Mouse).